The following is a 306-amino-acid chain: Probable rRNA-processing protein EBP2 (306 aa).

An N-acetylmethionine modification is found at M1. Disordered regions lie at residues 1–20 (MDTP…LVTD) and 77–99 (VPEI…VDPE). T3 is modified (phosphothreonine). 5 positions are modified to phosphoserine: S7, S9, S11, S13, and S16. K94 participates in a covalent cross-link: Glycyl lysine isopeptide (Lys-Gly) (interchain with G-Cter in SUMO2). Residues 138 to 169 (AEMAKSDLQMQKIRQKLQTKQAAMERSEKAKQ) adopt a coiled-coil conformation. Glycyl lysine isopeptide (Lys-Gly) (interchain with G-Cter in SUMO2) cross-links involve residues K179 and K218. Residues 213 to 306 (LEGDQKPLAQ…TREKMKNRTH (94 aa)) are disordered. S264 and S270 each carry phosphoserine. A compositionally biased stretch (basic residues) spans 274–306 (KTAHGRGLKRPGKKGSNKRPGKRTREKMKNRTH).

Belongs to the EBP2 family. In terms of assembly, specifically interacts with EBV EBNA1. The EBNA1-EBP2 interaction is important for the stable segregation of EBV episomes during cell division. Interacts with WDR46. Ubiquitous.

It is found in the nucleus. The protein resides in the nucleolus. Functionally, required for the processing of the 27S pre-rRNA. This Homo sapiens (Human) protein is Probable rRNA-processing protein EBP2 (EBNA1BP2).